The primary structure comprises 101 residues: Small ribosomal subunit protein uS14 (101 aa).

This sequence belongs to the universal ribosomal protein uS14 family. In terms of assembly, part of the 30S ribosomal subunit. Contacts proteins S3 and S10.

Functionally, binds 16S rRNA, required for the assembly of 30S particles and may also be responsible for determining the conformation of the 16S rRNA at the A site. The chain is Small ribosomal subunit protein uS14 from Cupriavidus metallidurans (strain ATCC 43123 / DSM 2839 / NBRC 102507 / CH34) (Ralstonia metallidurans).